Consider the following 144-residue polypeptide: Large ribosomal subunit protein uL15 (144 aa).

Basic and acidic residues predominate over residues 1–14 (MKLHELKPNEGARD). The interval 1 to 43 (MKLHELKPNEGARDVRKRVGRGTSSGTGKTAGRGQKGQKARSK) is disordered. The span at 23–35 (TSSGTGKTAGRGQ) shows a compositional bias: gly residues.

Belongs to the universal ribosomal protein uL15 family. As to quaternary structure, part of the 50S ribosomal subunit.

Its function is as follows. Binds to the 23S rRNA. The polypeptide is Large ribosomal subunit protein uL15 (Latilactobacillus sakei subsp. sakei (strain 23K) (Lactobacillus sakei subsp. sakei)).